Here is a 260-residue protein sequence, read N- to C-terminus: Putative ABC transporter ATP-binding protein PH0132 (260 aa).

Positions 2–234 constitute an ABC transporter domain; that stretch reads IEFRDVWFWY…DLEGFGLKEP (233 aa). An ATP-binding site is contributed by 34 to 41; that stretch reads GPNGSGKT.

Belongs to the ABC transporter superfamily.

It localises to the cell membrane. Probably part of an ABC transporter complex. Responsible for energy coupling to the transport system. This Pyrococcus horikoshii (strain ATCC 700860 / DSM 12428 / JCM 9974 / NBRC 100139 / OT-3) protein is Putative ABC transporter ATP-binding protein PH0132.